The primary structure comprises 1205 residues: Nitric oxide synthase 3 (1205 aa).

The interval 1 to 73 (MGNLKSVGQE…PPEGPKFPRV (73 aa)) is disordered. A lipid anchor (N-myristoyl glycine) is attached at G2. 2 S-palmitoyl cysteine lipidation sites follow: C15 and C26. Gly residues predominate over residues 15–27 (CGLGLGLGLGLCG). Over residues 33-47 (SPAPEPSRAPAPATP) the composition is skewed to pro residues. C96 and C101 together coordinate Zn(2+). The tract at residues 100–488 (CCLGSLVLPR…PDPWKGSATK (389 aa)) is interaction with NOSIP. A (6R)-L-erythro-5,6,7,8-tetrahydrobiopterin-binding site is contributed by S104. S116 carries the post-translational modification Phosphoserine; by CDK5. C186 contacts heme b. L-arginine contacts are provided by Q249, W358, Y359, E363, and N368. The (6R)-L-erythro-5,6,7,8-tetrahydrobiopterin site is built by A448, W449, and F462. Y477 is a heme b binding site. The tract at residues 492–512 (ITRKKTFKEVANAVKISASLM) is calmodulin-binding. T497 is subject to Phosphothreonine; by AMPK and PKA. The 184-residue stretch at 522 to 705 (ATILYASETG…AFRGWAKAAF (184 aa)) folds into the Flavodoxin-like domain. Residues S528, E529, T530, R532, S574, and T575 each contribute to the FMN site. Phosphoserine is present on residues S617, S635, and S640. Residues S656, C663, E689, and Q693 each contribute to the FMN site. The region spanning 758–1004 (RKMFQATVLS…IRGAPSFRLP (247 aa)) is the FAD-binding FR-type domain. Residue R778 coordinates NADP(+). An FAD-binding site is contributed by H800. The disordered stretch occupies residues 820–847 (EDPPPPTESVAVEQLEKGSPGGPPPSWV). S838 is subject to Phosphoserine. FAD contacts are provided by R940, Y942, S943, T958, A960, Y964, V977, C978, and S979. Residues T1018, R1051, S1080, R1081, K1087, Y1089, and Q1091 each contribute to the NADP(+) site. T1177 carries the phosphothreonine modification. Residue S1179 is modified to Phosphoserine; by AMPK, PDPK1 and PKA. Residue S1181 is modified to Phosphoserine.

The protein belongs to the NOS family. Homodimer. Interacts with NOSIP and NOSTRIN. Interacts with HSP90AB1. Forms a complex with ASL, ASS1 and SLC7A1; the complex regulates cell-autonomous L-arginine synthesis and citrulline recycling while channeling extracellular L-arginine to nitric oxide synthesis pathway. The cofactor is heme b. Requires FAD as cofactor. FMN is required as a cofactor. (6R)-L-erythro-5,6,7,8-tetrahydrobiopterin serves as cofactor. In terms of processing, phosphorylation by AMPK at Ser-1179 in the presence of Ca(2+)-calmodulin (CaM) activates activity. In absence of Ca(2+)-calmodulin, AMPK also phosphorylates Thr-497, resulting in inhibition of activity. Phosphorylation of Ser-116 by CDK5 reduces activity.

It is found in the cell membrane. The protein resides in the membrane. It localises to the caveola. Its subcellular location is the cytoplasm. The protein localises to the cytoskeleton. It is found in the golgi apparatus. The enzyme catalyses 2 L-arginine + 3 NADPH + 4 O2 + H(+) = 2 L-citrulline + 2 nitric oxide + 3 NADP(+) + 4 H2O. Stimulated by calcium/calmodulin. Inhibited by NOSIP and NOSTRIN. Its function is as follows. Produces nitric oxide (NO) which is implicated in vascular smooth muscle relaxation through a cGMP-mediated signal transduction pathway. NO mediates vascular endothelial growth factor (VEGF)-induced angiogenesis in coronary vessels and promotes blood clotting through the activation of platelets. The polypeptide is Nitric oxide synthase 3 (NOS3) (Bos taurus (Bovine)).